Here is a 371-residue protein sequence, read N- to C-terminus: Isopentenyl-diphosphate delta-isomerase (371 aa).

Residue 9 to 10 participates in substrate binding; that stretch reads RK. FMN-binding positions include Thr66, 67–69, Ser100, and Asn128; that span reads GMT. 100-102 is a substrate binding site; the sequence is SQR. A substrate-binding site is contributed by Gln167. Glu168 is a Mg(2+) binding site. FMN-binding positions include Lys199, Ser224, Thr229, 278–280, and 299–300; these read GMR and AL.

This sequence belongs to the IPP isomerase type 2 family. In terms of assembly, homooctamer. Dimer of tetramers. The cofactor is FMN. Requires NADPH as cofactor. Mg(2+) serves as cofactor.

The protein resides in the cytoplasm. It carries out the reaction isopentenyl diphosphate = dimethylallyl diphosphate. Involved in the biosynthesis of isoprenoids. Catalyzes the 1,3-allylic rearrangement of the homoallylic substrate isopentenyl (IPP) to its allylic isomer, dimethylallyl diphosphate (DMAPP). The polypeptide is Isopentenyl-diphosphate delta-isomerase (Pyrococcus horikoshii (strain ATCC 700860 / DSM 12428 / JCM 9974 / NBRC 100139 / OT-3)).